The following is a 964-amino-acid chain: Protein HIRA (964 aa).

WD repeat units follow at residues 10–50, 64–103, 123–162, 165–204, 259–331, and 335–376; these read RHEG…KDNT, DHFG…GTSE, GHTA…CTAV, GHTS…LAHK, GHNA…PLFV, and FFSQ…HRLS. The segment at 453-490 is disordered; that stretch reads SHEDSKKTAGPTADDVKKGNQLSSPVKQREYRRPDGRK. A compositionally biased stretch (basic and acidic residues) spans 479–490; the sequence is KQREYRRPDGRK. One copy of the WD 7 repeat lies at 644–685; it reads LWSDRISGKVTVLAGNANFWAVGCEDGFLQVYTRCGVRAMPA. The stretch at 920–940 forms a coiled coil; that stretch reads ASNRKVQRLLNEFMDLLLEYE.

The protein belongs to the WD repeat HIR1 family. As to quaternary structure, interacts with RS2. In terms of tissue distribution, more abundant in apices and young leaf primordia than in fully expanded leaf tissues.

The protein resides in the nucleus. Its function is as follows. Histone chaperone involved in maintining knox genes silencing throughout leaf development. In Zea mays (Maize), this protein is Protein HIRA.